We begin with the raw amino-acid sequence, 327 residues long: L-lactate dehydrogenase (327 aa).

NAD(+) contacts are provided by residues Val-18, Asp-39, Lys-44, Tyr-69, and 83-84 (GA). Substrate is bound by residues Gln-86, Arg-92, and 124–127 (NPVD). Residues 122–124 (AAN) and Ser-147 contribute to the NAD(+) site. 152–155 (DSAR) lines the substrate pocket. Residues Arg-157 and His-172 each contribute to the beta-D-fructose 1,6-bisphosphate site. His-179 serves as the catalytic Proton acceptor. Tyr-224 is modified (phosphotyrosine). Residue Thr-233 coordinates substrate.

Belongs to the LDH/MDH superfamily. LDH family. As to quaternary structure, homotetramer.

Its subcellular location is the cytoplasm. It catalyses the reaction (S)-lactate + NAD(+) = pyruvate + NADH + H(+). The protein operates within fermentation; pyruvate fermentation to lactate; (S)-lactate from pyruvate: step 1/1. With respect to regulation, allosterically activated by fructose 1,6-bisphosphate (FBP). Its function is as follows. Catalyzes the conversion of lactate to pyruvate. This is L-lactate dehydrogenase from Streptococcus equi subsp. zooepidemicus (strain H70).